The chain runs to 466 residues: Transcription factor eupR (466 aa).

A compositionally biased stretch (polar residues) spans 1–18 (MFSTEPRSDTAPGSPSCS). The tract at residues 1-22 (MFSTEPRSDTAPGSPSCSETKR) is disordered. Residues 32-62 (CWECKRRKVKCSYSNPSDPRCIGCRRRGTKC) constitute a DNA-binding region (zn(2)-C6 fungal-type).

The protein resides in the nucleus. Its function is as follows. Transcription factor; part of the gene cluster that mediates the biosynthesis of eupenifeldin, a bistropolone meroterpenoid that acts as an antitumor agent. This chain is Transcription factor eupR, found in Phoma sp.